The primary structure comprises 356 residues: Transcription elongation factor, mitochondrial (356 aa).

The N-terminal 35 residues, 1–35, are a transit peptide targeting the mitochondrion; it reads MTVPSLLLAGGRWRCFPLPLASSLFQALHNSCCRK.

Belongs to the TEFM family. In terms of assembly, interacts with POLRMT.

Its subcellular location is the mitochondrion matrix. It is found in the mitochondrion nucleoid. Its function is as follows. Transcription elongation factor which increases mitochondrial RNA polymerase processivity. Regulates transcription of the mitochondrial genome, including genes important for the oxidative phosphorylation machinery. This chain is Transcription elongation factor, mitochondrial (TEFM), found in Bos taurus (Bovine).